An 86-amino-acid chain; its full sequence is Small ribosomal subunit protein bS20 (86 aa).

Residues 1–22 form a disordered region; sequence MANIKSQIKRIRTNERRRLRNQ. The span at 7–20 shows a compositional bias: basic residues; that stretch reads QIKRIRTNERRRLR.

Belongs to the bacterial ribosomal protein bS20 family.

Its function is as follows. Binds directly to 16S ribosomal RNA. This Mycolicibacterium smegmatis (strain ATCC 700084 / mc(2)155) (Mycobacterium smegmatis) protein is Small ribosomal subunit protein bS20.